Reading from the N-terminus, the 268-residue chain is Undecaprenyl-diphosphatase (268 aa).

7 helical membrane passes run 47-67, 83-103, 109-129, 144-164, 184-204, 218-238, and 246-266; these read FAIL…FFKL, FIIG…IAGK, LFDP…LLWV, YPLM…IPGV, AAEF…VYDF, LIAI…KAFL, and FVLF…ALAL.

The protein belongs to the UppP family.

The protein resides in the cell inner membrane. It carries out the reaction di-trans,octa-cis-undecaprenyl diphosphate + H2O = di-trans,octa-cis-undecaprenyl phosphate + phosphate + H(+). In terms of biological role, catalyzes the dephosphorylation of undecaprenyl diphosphate (UPP). Confers resistance to bacitracin. This is Undecaprenyl-diphosphatase from Bradyrhizobium sp. (strain ORS 278).